Here is a 736-residue protein sequence, read N- to C-terminus: DEAD-box ATP-dependent RNA helicase 21 (736 aa).

Residues 14–38 (LTREEREKLALERRQAAVTDQRRSA) adopt a coiled-coil conformation. Over residues 25–38 (ERRQAAVTDQRRSA) the composition is skewed to basic and acidic residues. Disordered stretches follow at residues 25–178 (ERRQ…PKKR) and 231–263 (KVAAAHEKETRAEQRRKAGLDDRPEDDAVDKKE). Pro residues predominate over residues 46 to 58 (PRPPPPPPPPLSN). 2 stretches are compositionally biased toward basic and acidic residues: residues 64 to 166 (SSSH…DAIK) and 231 to 252 (KVAAAHEKETRAEQRRKAGLDD). Residues 137-167 (DRDRERGDREKDRLEKMAEREREKELDAIKE) adopt a coiled-coil conformation. A Q motif motif is present at residues 315–343 (RKWSESKLGTELLRAVEKAGYKEPSPIQM). One can recognise a Helicase ATP-binding domain in the interval 346–541 (IPLGLQQRDV…RKYLRNPVVV (196 aa)). 359 to 366 (AETGSGKT) provides a ligand contact to ATP. The short motif at 472 to 475 (DEAD) is the DEAD box element. One can recognise a Helicase C-terminal domain in the interval 568–712 (RLQKILTDLG…PVPPELARHE (145 aa)). Positions 704 to 736 (VPPELARHEASKFKPGSVPDRPPRRNDTVYATH) are disordered.

Belongs to the DEAD box helicase family. DDX23/PRP28 subfamily.

It is found in the cytoplasm. The protein localises to the nucleus. It catalyses the reaction ATP + H2O = ADP + phosphate + H(+). In terms of biological role, ATP-dependent RNA helicase involved in mRNA splicing. May destabilize the U1/5'-splice site duplex to permit an effective competition for the 5'-splice site by the U6 snRNA, resulting in the switch between U1 and U6 at the 5'-splice site. May also act to unwind the U4/U6 base-pairing interaction in the U4/U6/U5 snRNP, facilitating the first covalent step of splicing. In Oryza sativa subsp. japonica (Rice), this protein is DEAD-box ATP-dependent RNA helicase 21.